The chain runs to 686 residues: Acyl-CoA synthetase short-chain family member 3, mitochondrial (686 aa).

The N-terminal 29 residues, 1 to 29 (MKPSWLQCRKVTGAGGLGGSLPASSPARG), are a transit peptide targeting the mitochondrion. 226 to 229 (EPGR) is a binding site for CoA. Residues 424 to 426 (GER) and 445 to 450 (DHWWQT) each bind ATP. At K517 the chain carries N6-succinyllysine. K523 is subject to N6-acetyllysine. D538, R553, and R564 together coordinate ATP. Residue R623 coordinates CoA.

The protein belongs to the ATP-dependent AMP-binding enzyme family.

Its subcellular location is the mitochondrion matrix. The catalysed reaction is acetate + ATP + CoA = acetyl-CoA + AMP + diphosphate. The enzyme catalyses propanoate + ATP + CoA = propanoyl-CoA + AMP + diphosphate. It catalyses the reaction butanoate + ATP + CoA = butanoyl-CoA + AMP + diphosphate. Catalyzes the synthesis of acetyl-CoA from short-chain fatty acids. Propionate is the preferred substrate but can also utilize acetate and butyrate with a much lower affinity. This Bos taurus (Bovine) protein is Acyl-CoA synthetase short-chain family member 3, mitochondrial (ACSS3).